A 512-amino-acid chain; its full sequence is 2'-5'-oligoadenylate synthase-like protein 1 (512 aa).

2 Ubiquitin-like domains span residues 351-430 and 431-507; these read IQVT…ISPE and IQVF…EGKA.

Belongs to the 2-5A synthase family. Specifically interacts with the ligand binding domain of the thyroid receptor (TR). TRIP14 does not require the presence of thyroid hormone for its interaction. Binds MBD1.

Its subcellular location is the nucleus. The protein resides in the nucleolus. It localises to the cytoplasm. In terms of biological role, does not have 2'-5'-OAS activity, but can bind double-stranded RNA. Displays antiviral activity via an alternative antiviral pathway independent of RNase L. The chain is 2'-5'-oligoadenylate synthase-like protein 1 (Oasl) from Rattus norvegicus (Rat).